A 911-amino-acid chain; its full sequence is Eukaryotic translation initiation factor 3 subunit C (911 aa).

Disordered regions lie at residues 1-38 and 155-181; these read MSRF…DDEE and SRFR…GEAA. The span at 11–20 shows a compositional bias: acidic residues; sequence SESESSEEEV. Polar residues predominate over residues 23–32; it reads PNFNKASAFQ. A phosphoserine mark is found at Ser-34, Ser-165, Ser-175, and Ser-184. The segment covering 162-171 has biased composition (acidic residues); the sequence is DQESEAEDEE. The span at 196-208 shows a compositional bias: low complexity; that stretch reads APKIAKSAPAKSV. Positions 196 to 284 are disordered; the sequence is APKIAKSAPA…KRAEDDEDGE (89 aa). Acidic residues predominate over residues 210–236; that stretch reads ADDEDSDDSIDWDSDSESETESSEDEN. A compositionally biased stretch (basic and acidic residues) spans 241–271; that stretch reads MRERFLKRSTEKGEDKGDDDKRKDKRKEQKL. The region spanning 642–818 is the PCI domain; the sequence is FHMHINLELL…ETVVMHRSEP (177 aa). Positions 851 to 911 are disordered; sequence FQRGNMGNRG…QQQVQTIDEE (61 aa). The segment covering 885-896 has biased composition (basic residues); the sequence is QRNRNQRGHHKN. The span at 897–911 shows a compositional bias: low complexity; the sequence is QQQQQQQQVQTIDEE.

It belongs to the eIF-3 subunit C family. Component of the eukaryotic translation initiation factor 3 (eIF-3) complex. The eIF-3 complex interacts with pix.

It is found in the cytoplasm. In terms of biological role, component of the eukaryotic translation initiation factor 3 (eIF-3) complex, which is involved in protein synthesis of a specialized repertoire of mRNAs and, together with other initiation factors, stimulates binding of mRNA and methionyl-tRNAi to the 40S ribosome. The eIF-3 complex specifically targets and initiates translation of a subset of mRNAs involved in cell proliferation. The protein is Eukaryotic translation initiation factor 3 subunit C of Drosophila pseudoobscura pseudoobscura (Fruit fly).